A 396-amino-acid chain; its full sequence is Subtilisin-like protease 5 (396 aa).

An N-terminal signal peptide occupies residues 1 to 20 (MTGFFTILSFSLAALSVTNA). Positions 21 to 116 (AQILSVPKGA…VEPDAIISQH (96 aa)) are excised as a propeptide. The region spanning 37 to 113 (YIVVMKDDTS…VAFVEPDAII (77 aa)) is the Inhibitor I9 domain. A Peptidase S8 domain is found at 125 to 396 (PWGLSRLSNR…SRLLYNGSGR (272 aa)). Catalysis depends on charge relay system residues D156 and H187. N-linked (GlcNAc...) asparagine glycosylation is found at N230 and N248. Residue S342 is the Charge relay system of the active site. Positions 376–389 (PTIRNPGPDTTSRL) are enriched in polar residues. The disordered stretch occupies residues 376-396 (PTIRNPGPDTTSRLLYNGSGR). A glycan (N-linked (GlcNAc...) asparagine) is linked at N392.

Belongs to the peptidase S8 family.

It is found in the secreted. Its function is as follows. Secreted subtilisin-like serine protease with keratinolytic activity that contributes to pathogenicity. The sequence is that of Subtilisin-like protease 5 (SUB5) from Arthroderma benhamiae (strain ATCC MYA-4681 / CBS 112371) (Trichophyton mentagrophytes).